A 510-amino-acid chain; its full sequence is Bone morphogenetic protein 6 (510 aa).

The N-terminal stretch at Met1 to Ser20 is a signal peptide. The propeptide occupies Cys21 to Arg371. Disordered regions lie at residues Pro87 to Ser129 and Asn143 to Ser199. Residues Pro106–Gln116 show a composition bias toward low complexity. Residues Asn238, Asn266, Asn383, Asn401, and Asn451 are each glycosylated (N-linked (GlcNAc...) asparagine). Positions Thr370–Gly402 are disordered. The segment covering Asp390 to Asn401 has biased composition (polar residues). 3 disulfides stabilise this stretch: Cys409-Cys475, Cys438-Cys507, and Cys442-Cys509.

It belongs to the TGF-beta family. In terms of assembly, interacts with SOSTDC1. Interacts (when glycosylated) with type I receptor ACVR1; the interaction may induce HAMP expression. Interacts with type II receptor ACVR2B. Interacts with Hemojuvelin/HJV. Interacts with ERFE; the interaction inhibits BMP-induced transcription of HAMP. Interacts with BMPR1A/ALK3. Forms heterodimers with BMP2 in vitro; the heterodimer then binds to its receptor BMPR1A /ALK3 and may induce HAMP expression. In terms of tissue distribution, expressed in the lung. Low levels seen in the kidney.

It localises to the secreted. Growth factor of the TGF-beta superfamily that plays essential roles in many developmental processes including cartilage and bone formation. Also plays an important role in the regulation of HAMP/hepcidin expression and iron metabolism by acting as a ligand for hemojuvelin/HJV. Also acts to promote expression of HAMP, potentially via the interaction with its receptor BMPR1A/ALK3. Initiates the canonical BMP signaling cascade by associating with type I receptor ACVR1 and type II receptor ACVR2B. In turn, ACVR1 propagates signal by phosphorylating SMAD1/5/8 that travel to the nucleus and act as activators and repressors of transcription of target. Can also signal through non-canonical pathway such as TAZ-Hippo signaling cascade to modulate VEGF signaling by regulating VEGFR2 expression. The chain is Bone morphogenetic protein 6 (Bmp6) from Mus musculus (Mouse).